The sequence spans 161 residues: Epithelial membrane protein 2 (161 aa).

Transmembrane regions (helical) follow at residues 1-21 (MLVI…LLFI), 67-87 (TMIL…LQLF), 95-115 (FVFT…GASI), and 137-157 (FVVA…YLVL).

This sequence belongs to the PMP-22/EMP/MP20 family. Expressed in the arches, orbits, pectoral fins, vessels, pronephric renal tubules, and glomeruli.

The protein localises to the golgi apparatus membrane. It is found in the cell membrane. It localises to the apical cell membrane. Its subcellular location is the membrane raft. The protein resides in the cytoplasm. The protein localises to the nucleus. It is found in the perinuclear region. In terms of biological role, functions as a key regulator of cell membrane composition by regulating protein surface expression. Also, plays a role in regulation of processes including cell migration, cell proliferation, cell contraction and cell adhesion. May play a role in glomerular filtration. The protein is Epithelial membrane protein 2 (emp2) of Danio rerio (Zebrafish).